Here is a 426-residue protein sequence, read N- to C-terminus: Glutamyl-tRNA reductase (426 aa).

Residues 49–52 (TCNR), S101, 106–108 (EPQ), and Q112 contribute to the substrate site. C50 acts as the Nucleophile in catalysis. An NADP(+)-binding site is contributed by 181-186 (GAGETI). Residues 405–426 (RLFPEKPGYQHPPHSYPDREDR) form a disordered region.

Belongs to the glutamyl-tRNA reductase family. Homodimer.

It catalyses the reaction (S)-4-amino-5-oxopentanoate + tRNA(Glu) + NADP(+) = L-glutamyl-tRNA(Glu) + NADPH + H(+). The protein operates within porphyrin-containing compound metabolism; protoporphyrin-IX biosynthesis; 5-aminolevulinate from L-glutamyl-tRNA(Glu): step 1/2. Functionally, catalyzes the NADPH-dependent reduction of glutamyl-tRNA(Glu) to glutamate 1-semialdehyde (GSA). This Xanthomonas axonopodis pv. citri (strain 306) protein is Glutamyl-tRNA reductase.